The following is an 82-amino-acid chain: Small ribosomal subunit protein bS18 (82 aa).

The tract at residues 1–20 is disordered; sequence MVDINQIPTRRPFHRRRKTC.

The protein belongs to the bacterial ribosomal protein bS18 family. Part of the 30S ribosomal subunit. Forms a tight heterodimer with protein bS6.

Functionally, binds as a heterodimer with protein bS6 to the central domain of the 16S rRNA, where it helps stabilize the platform of the 30S subunit. In Chelativorans sp. (strain BNC1), this protein is Small ribosomal subunit protein bS18.